Reading from the N-terminus, the 316-residue chain is Probable inactive poly [ADP-ribose] polymerase SRO4 (316 aa).

The interval 1–28 (MDYSKTEETPINEEQGSTNSSESRSNEE) is disordered. The segment covering 14-23 (EQGSTNSSES) has biased composition (low complexity). The 228-residue stretch at 28-255 (ELFSDCDQQH…KSPWISFPVL (228 aa)) folds into the PARP catalytic domain. The 72-residue stretch at 243–314 (KNPKSPWISF…IKSVGQKVHK (72 aa)) folds into the RST domain.

Its subcellular location is the nucleus. Functionally, probable inactive ADP-ribosyltransferase that may be involved in stress and developmental responses. This is Probable inactive poly [ADP-ribose] polymerase SRO4 (SRO4) from Arabidopsis thaliana (Mouse-ear cress).